Here is a 346-residue protein sequence, read N- to C-terminus: MNNKLYGIILCFLLALPAWKLGKFFPLVGGPVFGIIIGIVIAILLKNRAKFDSGINFASKKVLQYAVILLGFGLNLQTIISVGSSSLPIIVSTISTSLIIAYILAKLINIPTKIVILIGVGSSICGGSAIAATAPVINAHDDEIAQAISVIFLFNVIAALIFPTLGDILNFSNKGFALFAGTAVNDTSSVTATASAWDSIHNTGTQVLDSATIVKLTRTLAIIPITLFLAVYNSKRSSNVNNFSLKKIFPMFIVYFILASIITTVCNYFIEVGVITENISITINNVFSFFKHLSKFFIIMAMVAIGLNTNIKKLILSGAKPLTLGFCCWFAISLVSIGLQKILGIF.

Helical transmembrane passes span 5–22, 27–49, 62–81, 86–108, 115–137, 147–169, 216–233, 248–270, 283–305, and 315–337; these read LYGI…WKLG, LVGG…KNRA, VLQY…TIIS, SLPI…AKLI, VILI…APVI, AISV…GDIL, LTRT…AVYN, IFPM…NYFI, INNV…MVAI, and ILSG…LVSI.

It belongs to the UPF0324 family.

The protein localises to the cell membrane. The sequence is that of UPF0324 membrane protein FN0533 from Fusobacterium nucleatum subsp. nucleatum (strain ATCC 25586 / DSM 15643 / BCRC 10681 / CIP 101130 / JCM 8532 / KCTC 2640 / LMG 13131 / VPI 4355).